The following is a 280-amino-acid chain: Bifunctional protein FolD (280 aa).

Residues 161-163, Ser186, and Ile227 contribute to the NADP(+) site; that span reads GRS.

This sequence belongs to the tetrahydrofolate dehydrogenase/cyclohydrolase family. As to quaternary structure, homodimer.

It carries out the reaction (6R)-5,10-methylene-5,6,7,8-tetrahydrofolate + NADP(+) = (6R)-5,10-methenyltetrahydrofolate + NADPH. The catalysed reaction is (6R)-5,10-methenyltetrahydrofolate + H2O = (6R)-10-formyltetrahydrofolate + H(+). The protein operates within one-carbon metabolism; tetrahydrofolate interconversion. Its function is as follows. Catalyzes the oxidation of 5,10-methylenetetrahydrofolate to 5,10-methenyltetrahydrofolate and then the hydrolysis of 5,10-methenyltetrahydrofolate to 10-formyltetrahydrofolate. This Caldanaerobacter subterraneus subsp. tengcongensis (strain DSM 15242 / JCM 11007 / NBRC 100824 / MB4) (Thermoanaerobacter tengcongensis) protein is Bifunctional protein FolD.